A 218-amino-acid chain; its full sequence is Probable GTP-binding protein EngB (218 aa).

Residues 23–200 (EVPEIAFVGR…AQLLWQWAHP (178 aa)) enclose the EngB-type G domain. GTP is bound by residues 31-38 (GRSNAGKS), 58-62 (GRTQH), 80-83 (DLPG), 150-153 (TKAD), and 179-181 (FSA). Mg(2+) contacts are provided by Ser38 and Thr60.

It belongs to the TRAFAC class TrmE-Era-EngA-EngB-Septin-like GTPase superfamily. EngB GTPase family. The cofactor is Mg(2+).

Its function is as follows. Necessary for normal cell division and for the maintenance of normal septation. This chain is Probable GTP-binding protein EngB, found in Acidovorax ebreus (strain TPSY) (Diaphorobacter sp. (strain TPSY)).